The sequence spans 282 residues: Formamidopyrimidine-DNA glycosylase (282 aa).

Catalysis depends on Pro2, which acts as the Schiff-base intermediate with DNA. Glu3 functions as the Proton donor in the catalytic mechanism. Residue Lys58 is the Proton donor; for beta-elimination activity of the active site. 3 residues coordinate DNA: His96, Arg115, and Lys152. The FPG-type zinc-finger motif lies at His238–Asn272. Arg262 (proton donor; for delta-elimination activity) is an active-site residue.

Belongs to the FPG family. As to quaternary structure, monomer. Zn(2+) is required as a cofactor.

The catalysed reaction is Hydrolysis of DNA containing ring-opened 7-methylguanine residues, releasing 2,6-diamino-4-hydroxy-5-(N-methyl)formamidopyrimidine.. The enzyme catalyses 2'-deoxyribonucleotide-(2'-deoxyribose 5'-phosphate)-2'-deoxyribonucleotide-DNA = a 3'-end 2'-deoxyribonucleotide-(2,3-dehydro-2,3-deoxyribose 5'-phosphate)-DNA + a 5'-end 5'-phospho-2'-deoxyribonucleoside-DNA + H(+). In terms of biological role, involved in base excision repair of DNA damaged by oxidation or by mutagenic agents. Acts as a DNA glycosylase that recognizes and removes damaged bases. Has a preference for oxidized purines, such as 7,8-dihydro-8-oxoguanine (8-oxoG). Has AP (apurinic/apyrimidinic) lyase activity and introduces nicks in the DNA strand. Cleaves the DNA backbone by beta-delta elimination to generate a single-strand break at the site of the removed base with both 3'- and 5'-phosphates. The protein is Formamidopyrimidine-DNA glycosylase of Corynebacterium aurimucosum (strain ATCC 700975 / DSM 44827 / CIP 107346 / CN-1) (Corynebacterium nigricans).